We begin with the raw amino-acid sequence, 329 residues long: 4-hydroxythreonine-4-phosphate dehydrogenase (329 aa).

The substrate site is built by His-136 and Thr-137. Positions 166, 211, and 266 each coordinate a divalent metal cation. Positions 274, 283, and 292 each coordinate substrate.

The protein belongs to the PdxA family. In terms of assembly, homodimer. It depends on Zn(2+) as a cofactor. Mg(2+) is required as a cofactor. Requires Co(2+) as cofactor.

The protein resides in the cytoplasm. The enzyme catalyses 4-(phosphooxy)-L-threonine + NAD(+) = 3-amino-2-oxopropyl phosphate + CO2 + NADH. The protein operates within cofactor biosynthesis; pyridoxine 5'-phosphate biosynthesis; pyridoxine 5'-phosphate from D-erythrose 4-phosphate: step 4/5. Its function is as follows. Catalyzes the NAD(P)-dependent oxidation of 4-(phosphooxy)-L-threonine (HTP) into 2-amino-3-oxo-4-(phosphooxy)butyric acid which spontaneously decarboxylates to form 3-amino-2-oxopropyl phosphate (AHAP). The polypeptide is 4-hydroxythreonine-4-phosphate dehydrogenase (Escherichia coli O17:K52:H18 (strain UMN026 / ExPEC)).